Here is a 251-residue protein sequence, read N- to C-terminus: Probable transcriptional regulatory protein PMI1113 (251 aa).

Belongs to the TACO1 family.

Its subcellular location is the cytoplasm. This chain is Probable transcriptional regulatory protein PMI1113, found in Proteus mirabilis (strain HI4320).